The chain runs to 92 residues: Small ribosomal subunit protein uS19 (92 aa).

Belongs to the universal ribosomal protein uS19 family.

Its function is as follows. Protein S19 forms a complex with S13 that binds strongly to the 16S ribosomal RNA. This chain is Small ribosomal subunit protein uS19, found in Malacoplasma penetrans (strain HF-2) (Mycoplasma penetrans).